Consider the following 118-residue polypeptide: Ribosome-binding factor A (118 aa).

This sequence belongs to the RbfA family. In terms of assembly, monomer. Binds 30S ribosomal subunits, but not 50S ribosomal subunits or 70S ribosomes.

It is found in the cytoplasm. In terms of biological role, one of several proteins that assist in the late maturation steps of the functional core of the 30S ribosomal subunit. Associates with free 30S ribosomal subunits (but not with 30S subunits that are part of 70S ribosomes or polysomes). Required for efficient processing of 16S rRNA. May interact with the 5'-terminal helix region of 16S rRNA. The protein is Ribosome-binding factor A of Bacillus cereus (strain B4264).